The chain runs to 329 residues: DNA-directed RNA polymerase subunit alpha (329 aa).

The alpha N-terminal domain (alpha-NTD) stretch occupies residues 1-235 (MQGSVTEFLK…EQLDAFVDLR (235 aa)). The segment at 249–329 (FDPILLRPVD…NWPPASIAED (81 aa)) is alpha C-terminal domain (alpha-CTD).

This sequence belongs to the RNA polymerase alpha chain family. Homodimer. The RNAP catalytic core consists of 2 alpha, 1 beta, 1 beta' and 1 omega subunit. When a sigma factor is associated with the core the holoenzyme is formed, which can initiate transcription.

The enzyme catalyses RNA(n) + a ribonucleoside 5'-triphosphate = RNA(n+1) + diphosphate. Functionally, DNA-dependent RNA polymerase catalyzes the transcription of DNA into RNA using the four ribonucleoside triphosphates as substrates. The protein is DNA-directed RNA polymerase subunit alpha of Aliivibrio salmonicida (strain LFI1238) (Vibrio salmonicida (strain LFI1238)).